The chain runs to 299 residues: Ankyrin repeat domain-containing protein 54 (299 aa).

The interval 1–27 (MAATGGGADDESRSGRSSSDGECAVAP) is disordered. A2 carries the N-acetylalanine modification. Position 62 is a phosphoserine (S62). Positions 98-116 (RRLGPTGKEVHALKRLRDS) match the Nuclear localization signal (NLS) motif. ANK repeat units follow at residues 108-137 (HALK…DPCA), 141-170 (KGRT…DPNQ), 174-203 (LGNT…RVDA), and 207-239 (AGRT…EVKQ). The tract at residues 140 to 240 (DKGRTALHFA…EAVRLEVKQI (101 aa)) is LYN-binding. Positions 282–292 (LLASFTSLSLQ) match the Nuclear export signal (NES) motif.

Interacts (via ankyrin repeat region) with LYN (via SH3-domain) in an activation-independent status of LYN. Forms a multiprotein complex with LYN and HCLS1. Interacts with TSN2, VAV1, DBNL and LASP1. As to expression, expressed in a variety of hemopoietic cell lines and tissue with high levels in testis. Highly expressed in ciliated cells.

Its subcellular location is the nucleus. It is found in the cytoplasm. The protein localises to the midbody. Its function is as follows. Plays an important role in regulating intracellular signaling events associated with erythroid terminal differentiation. This chain is Ankyrin repeat domain-containing protein 54 (Ankrd54), found in Mus musculus (Mouse).